The primary structure comprises 263 residues: Acetylglutamate kinase (263 aa).

Residues 48–49 (GG), Arg70, and Asn162 each bind substrate.

The protein belongs to the acetylglutamate kinase family. ArgB subfamily.

The protein localises to the cytoplasm. It catalyses the reaction N-acetyl-L-glutamate + ATP = N-acetyl-L-glutamyl 5-phosphate + ADP. It participates in amino-acid biosynthesis; L-arginine biosynthesis; N(2)-acetyl-L-ornithine from L-glutamate: step 2/4. In terms of biological role, catalyzes the ATP-dependent phosphorylation of N-acetyl-L-glutamate. This Shewanella sediminis (strain HAW-EB3) protein is Acetylglutamate kinase.